The chain runs to 353 residues: Holliday junction branch migration complex subunit RuvB (353 aa).

The large ATPase domain (RuvB-L) stretch occupies residues 4–190 (TDKLQAPRVI…FGIVARLEFY (187 aa)). ATP contacts are provided by residues L29, R30, G71, K74, T75, T76, 137 to 139 (EDF), R180, Y190, and R227. T75 provides a ligand contact to Mg(2+). The small ATPAse domain (RuvB-S) stretch occupies residues 191-261 (TPHELAYIVG…VADAALLMLD (71 aa)). The head domain (RuvB-H) stretch occupies residues 264–353 (HLGLDLMDRK…DESAELFSAP (90 aa)). Residues R319 and R324 each contribute to the DNA site.

This sequence belongs to the RuvB family. In terms of assembly, homohexamer. Forms an RuvA(8)-RuvB(12)-Holliday junction (HJ) complex. HJ DNA is sandwiched between 2 RuvA tetramers; dsDNA enters through RuvA and exits via RuvB. An RuvB hexamer assembles on each DNA strand where it exits the tetramer. Each RuvB hexamer is contacted by two RuvA subunits (via domain III) on 2 adjacent RuvB subunits; this complex drives branch migration. In the full resolvosome a probable DNA-RuvA(4)-RuvB(12)-RuvC(2) complex forms which resolves the HJ.

The protein resides in the cytoplasm. The enzyme catalyses ATP + H2O = ADP + phosphate + H(+). In terms of biological role, the RuvA-RuvB-RuvC complex processes Holliday junction (HJ) DNA during genetic recombination and DNA repair, while the RuvA-RuvB complex plays an important role in the rescue of blocked DNA replication forks via replication fork reversal (RFR). RuvA specifically binds to HJ cruciform DNA, conferring on it an open structure. The RuvB hexamer acts as an ATP-dependent pump, pulling dsDNA into and through the RuvAB complex. RuvB forms 2 homohexamers on either side of HJ DNA bound by 1 or 2 RuvA tetramers; 4 subunits per hexamer contact DNA at a time. Coordinated motions by a converter formed by DNA-disengaged RuvB subunits stimulates ATP hydrolysis and nucleotide exchange. Immobilization of the converter enables RuvB to convert the ATP-contained energy into a lever motion, pulling 2 nucleotides of DNA out of the RuvA tetramer per ATP hydrolyzed, thus driving DNA branch migration. The RuvB motors rotate together with the DNA substrate, which together with the progressing nucleotide cycle form the mechanistic basis for DNA recombination by continuous HJ branch migration. Branch migration allows RuvC to scan DNA until it finds its consensus sequence, where it cleaves and resolves cruciform DNA. The polypeptide is Holliday junction branch migration complex subunit RuvB (Aromatoleum aromaticum (strain DSM 19018 / LMG 30748 / EbN1) (Azoarcus sp. (strain EbN1))).